A 177-amino-acid chain; its full sequence is ATP synthase subunit delta (177 aa).

This sequence belongs to the ATPase delta chain family. As to quaternary structure, F-type ATPases have 2 components, F(1) - the catalytic core - and F(0) - the membrane proton channel. F(1) has five subunits: alpha(3), beta(3), gamma(1), delta(1), epsilon(1). F(0) has three main subunits: a(1), b(2) and c(10-14). The alpha and beta chains form an alternating ring which encloses part of the gamma chain. F(1) is attached to F(0) by a central stalk formed by the gamma and epsilon chains, while a peripheral stalk is formed by the delta and b chains.

The protein localises to the cell inner membrane. F(1)F(0) ATP synthase produces ATP from ADP in the presence of a proton or sodium gradient. F-type ATPases consist of two structural domains, F(1) containing the extramembraneous catalytic core and F(0) containing the membrane proton channel, linked together by a central stalk and a peripheral stalk. During catalysis, ATP synthesis in the catalytic domain of F(1) is coupled via a rotary mechanism of the central stalk subunits to proton translocation. In terms of biological role, this protein is part of the stalk that links CF(0) to CF(1). It either transmits conformational changes from CF(0) to CF(1) or is implicated in proton conduction. The polypeptide is ATP synthase subunit delta (Escherichia coli O81 (strain ED1a)).